The following is a 237-amino-acid chain: CDP-diacylglycerol--serine O-phosphatidyltransferase (237 aa).

8 helical membrane-spanning segments follow: residues Ile-3–Met-23, Ile-25–Ile-45, Val-73–Gly-93, Ile-95–Asn-115, Tyr-124–Leu-144, Phe-150–Met-170, Trp-184–Leu-204, and Leu-207–Val-227.

This sequence belongs to the CDP-alcohol phosphatidyltransferase class-I family.

It localises to the cell membrane. It carries out the reaction a CDP-1,2-diacyl-sn-glycerol + L-serine = a 1,2-diacyl-sn-glycero-3-phospho-L-serine + CMP + H(+). The protein is CDP-diacylglycerol--serine O-phosphatidyltransferase (pssA) of Helicobacter pylori (strain ATCC 700392 / 26695) (Campylobacter pylori).